The following is a 179-amino-acid chain: Large ribosomal subunit protein uL5 (179 aa).

Belongs to the universal ribosomal protein uL5 family. In terms of assembly, part of the 50S ribosomal subunit; part of the 5S rRNA/L5/L18/L25 subcomplex. Contacts the 5S rRNA and the P site tRNA. Forms a bridge to the 30S subunit in the 70S ribosome.

This is one of the proteins that bind and probably mediate the attachment of the 5S RNA into the large ribosomal subunit, where it forms part of the central protuberance. In the 70S ribosome it contacts protein S13 of the 30S subunit (bridge B1b), connecting the 2 subunits; this bridge is implicated in subunit movement. Contacts the P site tRNA; the 5S rRNA and some of its associated proteins might help stabilize positioning of ribosome-bound tRNAs. The protein is Large ribosomal subunit protein uL5 of Bacillus velezensis (strain DSM 23117 / BGSC 10A6 / LMG 26770 / FZB42) (Bacillus amyloliquefaciens subsp. plantarum).